We begin with the raw amino-acid sequence, 191 residues long: Small ribosomal subunit protein uS10c (191 aa).

Residues 1–56 constitute a chloroplast transit peptide; sequence MAVSTVSSFLLPSFGIPSSSPSSTRLKVSLLPSSSTHGGLSSCVLTKPSVSLTKVF.

It belongs to the universal ribosomal protein uS10 family. As to quaternary structure, part of the 30S ribosomal subunit.

Its subcellular location is the plastid. The protein resides in the chloroplast. The sequence is that of Small ribosomal subunit protein uS10c (RPS10) from Arabidopsis thaliana (Mouse-ear cress).